The sequence spans 189 residues: Potassium-transporting ATPase KdpC subunit (189 aa).

A helical membrane pass occupies residues 6–26 (PAILFFIVFTILCGGVYPAVV).

Belongs to the KdpC family. As to quaternary structure, the system is composed of three essential subunits: KdpA, KdpB and KdpC.

It is found in the cell inner membrane. Functionally, part of the high-affinity ATP-driven potassium transport (or Kdp) system, which catalyzes the hydrolysis of ATP coupled with the electrogenic transport of potassium into the cytoplasm. This subunit acts as a catalytic chaperone that increases the ATP-binding affinity of the ATP-hydrolyzing subunit KdpB by the formation of a transient KdpB/KdpC/ATP ternary complex. This chain is Potassium-transporting ATPase KdpC subunit, found in Geotalea uraniireducens (strain Rf4) (Geobacter uraniireducens).